A 262-amino-acid chain; its full sequence is Phosphate import ATP-binding protein PstB (262 aa).

One can recognise an ABC transporter domain in the interval 16–257; sequence MEARHLSVRY…PSEQRTEDYV (242 aa). Position 48-55 (48-55) interacts with ATP; that stretch reads GPSGCGKS.

It belongs to the ABC transporter superfamily. Phosphate importer (TC 3.A.1.7) family. As to quaternary structure, the complex is composed of two ATP-binding proteins (PstB), two transmembrane proteins (PstC and PstA) and a solute-binding protein (PstS).

The protein resides in the cell inner membrane. The catalysed reaction is phosphate(out) + ATP + H2O = ADP + 2 phosphate(in) + H(+). Its function is as follows. Part of the ABC transporter complex PstSACB involved in phosphate import. Responsible for energy coupling to the transport system. The polypeptide is Phosphate import ATP-binding protein PstB (Anaeromyxobacter dehalogenans (strain 2CP-C)).